A 509-amino-acid chain; its full sequence is Maturase K (509 aa).

This sequence belongs to the intron maturase 2 family. MatK subfamily.

It is found in the plastid. Its subcellular location is the chloroplast. Usually encoded in the trnK tRNA gene intron. Probably assists in splicing its own and other chloroplast group II introns. This Vatairea macrocarpa protein is Maturase K.